The chain runs to 180 residues: Putative phycocyanobilin lyase CpcS 2 (180 aa).

The protein belongs to the CpcS/CpeS biliprotein lyase family.

In terms of biological role, covalently attaches a chromophore to Cys residue(s) of phycobiliproteins (Potential). In vitro does not act as a chromophore lyase for ApcA1, ApcA2, ApcB, ApcD, ApcF, CpcB or PecB, the lyase activity is therefore unsure. This is Putative phycocyanobilin lyase CpcS 2 (cpeS2) from Nostoc sp. (strain PCC 7120 / SAG 25.82 / UTEX 2576).